A 368-amino-acid chain; its full sequence is 3-dehydroquinate synthase (368 aa).

Residues 80 to 85, 114 to 118, 138 to 139, lysine 151, and lysine 160 each bind NAD(+); these read DAESAK, GAATD, and TT. Glutamate 193, histidine 255, and histidine 271 together coordinate Zn(2+).

Belongs to the sugar phosphate cyclases superfamily. Dehydroquinate synthase family. It depends on Co(2+) as a cofactor. The cofactor is Zn(2+). NAD(+) is required as a cofactor.

The protein localises to the cytoplasm. It carries out the reaction 7-phospho-2-dehydro-3-deoxy-D-arabino-heptonate = 3-dehydroquinate + phosphate. Its pathway is metabolic intermediate biosynthesis; chorismate biosynthesis; chorismate from D-erythrose 4-phosphate and phosphoenolpyruvate: step 2/7. Catalyzes the conversion of 3-deoxy-D-arabino-heptulosonate 7-phosphate (DAHP) to dehydroquinate (DHQ). This chain is 3-dehydroquinate synthase, found in Corynebacterium jeikeium (strain K411).